Here is a 293-residue protein sequence, read N- to C-terminus: Mediator of RNA polymerase II transcription subunit 27 (293 aa).

This sequence belongs to the Mediator complex subunit 27 family. Component of the Mediator complex, which includes at least CDK8, MED4, MED6, MED11, MED14, MED17, MED18, MED20, MED21, MED22, MED27, MED28, MED30 and MED31.

The protein localises to the nucleus. Functionally, component of the Mediator complex, a coactivator involved in the regulated transcription of nearly all RNA polymerase II-dependent genes. Mediator functions as a bridge to convey information from gene-specific regulatory proteins to the basal RNA polymerase II transcription machinery. Mediator is recruited to promoters by direct interactions with regulatory proteins and serves as a scaffold for the assembly of a functional preinitiation complex with RNA polymerase II and the general transcription factors. Required for activated transcription of the MtnA gene. This is Mediator of RNA polymerase II transcription subunit 27 (MED27) from Drosophila melanogaster (Fruit fly).